Here is a 262-residue protein sequence, read N- to C-terminus: uncharacterized protein (262 aa).

The next 3 membrane-spanning stretches (helical) occupy residues 4–24, 28–48, and 62–82; these read LIVFLSMLSSSVAGFFGRFLG, VSRFNLIIFLILLVFSICLFR, and CYLALVCQISLFLVLLRSHIL. Residues 152 to 181 adopt a coiled-coil conformation; sequence EREARAQEHDRISAEVETITSACENLEAAM.

It localises to the mitochondrion membrane. This is an uncharacterized protein from Arabidopsis thaliana (Mouse-ear cress).